The chain runs to 372 residues: MGWLRKKKKPKSDIASERGAKLLEELIECCDGKSNPIKFFSADEILKATNDFSDSNFVLRLEVPFKWYSGKNENHPMILIKKDVGWWSGLRVDRLCRDIAVSSMVSGHKNFMKLVGCCLELDYPVMVYHSVKKHYKLEISEQPWKKRMKIAEDIATALAYLHTAFPRPFVYRILSHWNILLDEDGVAKLTDFSHCVSIPEGETFVRVDRDVGLYSYFADNYVRSGLVSDKTDVFAFGIFMGHRLLLGYEYYFEHYRGEEEESEDGFDSLMKRHARNLLSTLKEDRPMEEIADSKMIEKMGQISEQERCQMKAFLKLSLRCTGPSEEVPTMVEVAKELNKIQRSLFNDSSSLSSGQTQLDSAQDISSTVVLSN.

ATP contacts are provided by residues 1 to 4 and Lys38; that span reads MGWL. The Protein kinase domain maps to 1 to 314; sequence MGWLRKKKKP…QERCQMKAFL (314 aa). Tyr128 and Tyr221 each carry phosphotyrosine. The segment at 348-372 is disordered; that stretch reads SSSLSSGQTQLDSAQDISSTVVLSN. Residues 354–372 show a composition bias toward polar residues; sequence GQTQLDSAQDISSTVVLSN.

It belongs to the protein kinase superfamily.

The sequence is that of Probable inactive receptor-like protein kinase At1g65250 from Arabidopsis thaliana (Mouse-ear cress).